Here is a 513-residue protein sequence, read N- to C-terminus: Maturase K (513 aa).

It belongs to the intron maturase 2 family. MatK subfamily.

It localises to the plastid. It is found in the chloroplast. Usually encoded in the trnK tRNA gene intron. Probably assists in splicing its own and other chloroplast group II introns. This chain is Maturase K, found in Molinia caerulea (Purple moor-grass).